The sequence spans 68 residues: DNA gyrase inhibitor YacG (68 aa).

Positions 14, 17, 29, and 33 each coordinate Zn(2+).

It belongs to the DNA gyrase inhibitor YacG family. In terms of assembly, interacts with GyrB. The cofactor is Zn(2+).

Its function is as follows. Inhibits all the catalytic activities of DNA gyrase by preventing its interaction with DNA. Acts by binding directly to the C-terminal domain of GyrB, which probably disrupts DNA binding by the gyrase. The protein is DNA gyrase inhibitor YacG of Azorhizobium caulinodans (strain ATCC 43989 / DSM 5975 / JCM 20966 / LMG 6465 / NBRC 14845 / NCIMB 13405 / ORS 571).